Consider the following 192-residue polypeptide: WYSSMFAANIKQEPISHHHHHHHAHHSHHADSNSNASSPHQSPLPSPNPPSNTNLQLEQYLKQQQQQQQQHQQQQQPMDTLCAAAMTPSPSNNDQNSPLMWSGLPNPMQTIMPANMRPSPTAATAATTTELCAPTTTTAAIALQANDKLQALTPPMDVTPPKSPAKSQQSCAEPEKEHDLMSNSSEDMKYMA.

Disordered regions lie at residues 16–54 (SHHH…SNTN) and 152–192 (LTPP…KYMA). Residues 17–28 (HHHHHHHAHHSH) are compositionally biased toward basic residues. A compositionally biased stretch (low complexity) spans 32–41 (SNSNASSPHQ). The span at 173–192 (EPEKEHDLMSNSSEDMKYMA) shows a compositional bias: basic and acidic residues.

It belongs to the hunchback C2H2-type zinc-finger protein family.

It localises to the nucleus. In terms of biological role, gap class segmentation protein that controls development of head structures. In Drosophila tanythrix (Fruit fly), this protein is Protein hunchback (hb).